Consider the following 187-residue polypeptide: Orotate phosphoribosyltransferase (187 aa).

5-phospho-alpha-D-ribose 1-diphosphate contacts are provided by residues R98, K99, K102, H104, and E128–S136. 2 residues coordinate orotate: T132 and R160.

Belongs to the purine/pyrimidine phosphoribosyltransferase family. PyrE subfamily. As to quaternary structure, homodimer. Mg(2+) is required as a cofactor.

The catalysed reaction is orotidine 5'-phosphate + diphosphate = orotate + 5-phospho-alpha-D-ribose 1-diphosphate. It participates in pyrimidine metabolism; UMP biosynthesis via de novo pathway; UMP from orotate: step 1/2. Functionally, catalyzes the transfer of a ribosyl phosphate group from 5-phosphoribose 1-diphosphate to orotate, leading to the formation of orotidine monophosphate (OMP). The polypeptide is Orotate phosphoribosyltransferase (Rhodopseudomonas palustris (strain BisB5)).